A 166-amino-acid chain; its full sequence is NAD(P)H-quinone oxidoreductase subunit I, chloroplastic (166 aa).

2 consecutive 4Fe-4S ferredoxin-type domains span residues Gly-55 to Lys-84 and Leu-95 to Glu-124. Residues Cys-64, Cys-67, Cys-70, Cys-74, Cys-104, Cys-107, Cys-110, and Cys-114 each coordinate [4Fe-4S] cluster.

The protein belongs to the complex I 23 kDa subunit family. NDH is composed of at least 16 different subunits, 5 of which are encoded in the nucleus. The cofactor is [4Fe-4S] cluster.

The protein localises to the plastid. It is found in the chloroplast thylakoid membrane. The catalysed reaction is a plastoquinone + NADH + (n+1) H(+)(in) = a plastoquinol + NAD(+) + n H(+)(out). It catalyses the reaction a plastoquinone + NADPH + (n+1) H(+)(in) = a plastoquinol + NADP(+) + n H(+)(out). Its function is as follows. NDH shuttles electrons from NAD(P)H:plastoquinone, via FMN and iron-sulfur (Fe-S) centers, to quinones in the photosynthetic chain and possibly in a chloroplast respiratory chain. The immediate electron acceptor for the enzyme in this species is believed to be plastoquinone. Couples the redox reaction to proton translocation, and thus conserves the redox energy in a proton gradient. This Lactuca sativa (Garden lettuce) protein is NAD(P)H-quinone oxidoreductase subunit I, chloroplastic.